The primary structure comprises 263 residues: Shikimate dehydrogenase (NADP(+)) (263 aa).

Residues 14–16 and threonine 60 each bind shikimate; that span reads SLS. Catalysis depends on lysine 64, which acts as the Proton acceptor. Shikimate-binding residues include asparagine 85 and aspartate 100. NADP(+)-binding positions include 123–127, 146–151, and leucine 205; these read GAGGA and NRTPQR. Tyrosine 207 is a binding site for shikimate. Residue glycine 228 participates in NADP(+) binding. Residue glutamine 235 coordinates shikimate.

This sequence belongs to the shikimate dehydrogenase family. As to quaternary structure, homodimer.

It carries out the reaction shikimate + NADP(+) = 3-dehydroshikimate + NADPH + H(+). Its pathway is metabolic intermediate biosynthesis; chorismate biosynthesis; chorismate from D-erythrose 4-phosphate and phosphoenolpyruvate: step 4/7. Its function is as follows. Involved in the biosynthesis of the chorismate, which leads to the biosynthesis of aromatic amino acids. Catalyzes the reversible NADPH linked reduction of 3-dehydroshikimate (DHSA) to yield shikimate (SA). The sequence is that of Shikimate dehydrogenase (NADP(+)) from Thermus thermophilus (strain ATCC 27634 / DSM 579 / HB8).